Consider the following 34-residue polypeptide: Photosystem II reaction center protein Psb30 (34 aa).

A helical membrane pass occupies residues 6-26 (VIAQLVSLGVIVLVGPAVIIL).

Belongs to the Psb30/Ycf12 family. PSII is composed of 1 copy each of membrane proteins PsbA, PsbB, PsbC, PsbD, PsbE, PsbF, PsbH, PsbI, PsbJ, PsbK, PsbL, PsbM, PsbT, PsbX, PsbY, PsbZ, Psb30/Ycf12, peripheral proteins of the oxygen-evolving complex and a large number of cofactors. It forms dimeric complexes.

Its subcellular location is the plastid. It is found in the chloroplast thylakoid membrane. Its function is as follows. A core subunit of photosystem II (PSII), probably helps stabilize the reaction center. The sequence is that of Photosystem II reaction center protein Psb30 from Pyropia yezoensis (Susabi-nori).